We begin with the raw amino-acid sequence, 380 residues long: Cytochrome b (380 aa).

Transmembrane regions (helical) follow at residues 33–53 (FGSLLGLCLATQILTGLFLAM), 77–98 (WLIRNMHANGASFFFICIYLHI), 113–133 (WNVGVALFLLTMMTAFVGYVL), and 178–198 (FFAFHFLFPFVIAALTAIHLL). Positions 83 and 97 each coordinate heme b. Residues H182 and H196 each contribute to the heme b site. H201 is a binding site for a ubiquinone. Helical transmembrane passes span 226 to 246 (YKDLLGFATLMVTLTSLALFS), 288 to 308 (LGGVLALLSSILILTAVPALH), 320 to 340 (ITQLLFWTLVAAVLVLTWIGG), and 347 to 367 (FIIIGQIASLLYFMLFLTLIP).

Belongs to the cytochrome b family. The cytochrome bc1 complex contains 3 respiratory subunits (MT-CYB, CYC1 and UQCRFS1), 2 core proteins (UQCRC1 and UQCRC2) and probably 6 low-molecular weight proteins. It depends on heme b as a cofactor.

The protein resides in the mitochondrion inner membrane. Component of the ubiquinol-cytochrome c reductase complex (complex III or cytochrome b-c1 complex) that is part of the mitochondrial respiratory chain. The b-c1 complex mediates electron transfer from ubiquinol to cytochrome c. Contributes to the generation of a proton gradient across the mitochondrial membrane that is then used for ATP synthesis. The chain is Cytochrome b (mt-cyb) from Percopsis transmontana (Sand roller).